We begin with the raw amino-acid sequence, 445 residues long: MREIVHIQAGQCGNQIGAKFWEVISDEHGIDPTGSYHGDSDLQLERINVYYNEAAGNKYVPRAILVDLEPGTMDSVRSGPFGQIFRPDNFVFGQSGAGNNWAKGHYTEGAELVDSVLDVVRKESESCDCLQGFQLTHSLGGGTGSGMGTLLISKIREEYPDRIMNTFSVVPSPKVSDTVVEPYNATLSVHQLVENTDETYCIDNEALYDICFRTLKLTTPTYGDLNHLVSATMSGVTTCLRFPGQLNADLRKLAVNMVPFPRLHFFMPGFAPLTSRGSQQYRALTVPELTQQMFDAKNMMAACDPRHGRYLTVAAVFRGRMSMKEVDEQMLNVQNKNSSYFVEWIPNNVKTAVCDIPPRGLKMSATFIGNSTAIQELFKRISEQFTAMFRRKAFLHWYTGEGMDEMEFTEAESNMNDLVSEYQQYQDATADEQGEFEEEGEEDEA.

An MREI motif motif is present at residues 1-4 (MREI). Glutamine 11 provides a ligand contact to GTP. Phosphoserine is present on serine 40. At lysine 58 the chain carries N6-acetyllysine; alternate. Lysine 58 carries the N6-succinyllysine; alternate modification. Lysine 58 is covalently cross-linked (Glycyl lysine isopeptide (Lys-Gly) (interchain with G-Cter in ubiquitin); alternate). GTP-binding residues include glutamate 69, serine 138, glycine 142, threonine 143, and glycine 144. Glutamate 69 lines the Mg(2+) pocket. Residue serine 172 is modified to Phosphoserine; by CDK1. Residues asparagine 204 and asparagine 226 each coordinate GTP. Residues threonine 285 and threonine 290 each carry the phosphothreonine modification. An Omega-N-methylarginine modification is found at arginine 318. Lysine 324 participates in a covalent cross-link: Glycyl lysine isopeptide (Lys-Gly) (interchain with G-Cter in ubiquitin). Residues 424-445 (QYQDATADEQGEFEEEGEEDEA) form a disordered region. Acidic residues predominate over residues 429–445 (TADEQGEFEEEGEEDEA). Position 438 is a 5-glutamyl polyglutamate (glutamate 438).

Belongs to the tubulin family. As to quaternary structure, dimer of alpha and beta chains. A typical microtubule is a hollow water-filled tube with an outer diameter of 25 nm and an inner diameter of 15 nM. Alpha-beta heterodimers associate head-to-tail to form protofilaments running lengthwise along the microtubule wall with the beta-tubulin subunit facing the microtubule plus end conferring a structural polarity. Microtubules usually have 13 protofilaments but different protofilament numbers can be found in some organisms and specialized cells. Interacts with NCKAP5L. Mg(2+) serves as cofactor. In terms of processing, some glutamate residues at the C-terminus are polyglycylated, resulting in polyglycine chains on the gamma-carboxyl group. Glycylation is mainly limited to tubulin incorporated into axonemes (cilia and flagella) whereas glutamylation is prevalent in neuronal cells, centrioles, axonemes, and the mitotic spindle. Both modifications can coexist on the same protein on adjacent residues, and lowering polyglycylation levels increases polyglutamylation, and reciprocally. Cilia and flagella glycylation is required for their stability and maintenance. Flagella glycylation controls sperm motility. Post-translationally, some glutamate residues at the C-terminus are polyglutamylated, resulting in polyglutamate chains on the gamma-carboxyl group. Polyglutamylation plays a key role in microtubule severing by spastin (SPAST). SPAST preferentially recognizes and acts on microtubules decorated with short polyglutamate tails: severing activity by SPAST increases as the number of glutamates per tubulin rises from one to eight, but decreases beyond this glutamylation threshold. Phosphorylated on Ser-172 by CDK1 during the cell cycle, from metaphase to telophase, but not in interphase. This phosphorylation inhibits tubulin incorporation into microtubules.

It is found in the cytoplasm. It localises to the cytoskeleton. In terms of biological role, tubulin is the major constituent of microtubules, a cylinder consisting of laterally associated linear protofilaments composed of alpha- and beta-tubulin heterodimers. Microtubules grow by the addition of GTP-tubulin dimers to the microtubule end, where a stabilizing cap forms. Below the cap, tubulin dimers are in GDP-bound state, owing to GTPase activity of alpha-tubulin. This chain is Tubulin beta chain, found in Sus scrofa (Pig).